The chain runs to 992 residues: Disks large-associated protein 4 (992 aa).

Positions 1 to 20 (MKGLGDSRPRHLSDSLDPPH) are enriched in basic and acidic residues. Disordered stretches follow at residues 1-31 (MKGL…DRNP) and 154-226 (APSM…ASGL). Residues 162–171 (GKVGGNGGKK) show a composition bias toward gly residues. Basic and acidic residues predominate over residues 172 to 194 (GVLEDGKGRRAKSKERAKAGEPK). Residues 199 to 208 (SNISGWWSSD) show a composition bias toward polar residues. Phosphoserine occurs at positions 206 and 207. Omega-N-methylarginine is present on Arg-290. 5 disordered regions span residues 342-435 (TTLL…SWEE), 527-665 (SVSL…RKLS), 677-751 (VPKE…GPRQ), 763-798 (SYGD…AQPG), and 915-992 (TPEK…QTRL). Residues Ser-377, Ser-380, Ser-384, Ser-388, Ser-405, Ser-415, and Ser-421 each carry the phosphoserine modification. Positions 399-413 (LRATQQSLGEQSNPR) are enriched in polar residues. The span at 528-554 (VSLQSLSPPPSTGSLSNSRTLPSSSCL) shows a compositional bias: low complexity. Over residues 576 to 591 (VTVQSSTESAQDTYLD) the composition is skewed to polar residues. Phosphoserine is present on residues Ser-580, Ser-581, Ser-609, Ser-611, Ser-665, and Ser-744. Low complexity predominate over residues 600–620 (TSQSGLSNSSDSLDSSTRPPS). Thr-915 is subject to Phosphothreonine. 2 stretches are compositionally biased toward basic and acidic residues: residues 915–925 (TPEKRKEEKKP) and 940–958 (VSRD…EARK). Positions 969–978 (VRQNSATESA) are enriched in polar residues. Position 973 is a phosphoserine (Ser-973).

It belongs to the SAPAP family. Interacts with DLG1 and DLG4/PSD-95. In terms of tissue distribution, expressed in brain.

It localises to the membrane. Its function is as follows. May play a role in the molecular organization of synapses and neuronal cell signaling. Could be an adapter protein linking ion channel to the subsynaptic cytoskeleton. May induce enrichment of PSD-95/SAP90 at the plasma membrane. This is Disks large-associated protein 4 (Dlgap4) from Rattus norvegicus (Rat).